A 265-amino-acid chain; its full sequence is Anamorsin homolog (265 aa).

The segment at 1 to 147 is N-terminal SAM-like domain; sequence MDAAKMYGAV…WKIGSSFALK (147 aa). The tract at residues 147–176 is linker; sequence KKVVKSSPKVQIDFDSDLIDENSLLSEEDL. [2Fe-2S] cluster-binding residues include cysteine 186, cysteine 195, cysteine 198, and cysteine 200. The tract at residues 186–200 is fe-S binding site A; it reads CEIGPTRKACKNCSC. 4 residues coordinate [4Fe-4S] cluster: cysteine 226, cysteine 229, cysteine 237, and cysteine 240. 2 short sequence motifs (cx2C motif) span residues 226–229 and 237–240; these read CGSC and CSTC. A fe-S binding site B region spans residues 226–240; sequence CGSCGLGDAFRCSTC.

The protein belongs to the anamorsin family. Monomer. Requires [2Fe-2S] cluster as cofactor. [4Fe-4S] cluster is required as a cofactor.

It localises to the cytoplasm. Its subcellular location is the mitochondrion intermembrane space. In terms of biological role, component of the cytosolic iron-sulfur (Fe-S) protein assembly (CIA) machinery. Required for the maturation of extramitochondrial Fe-S proteins. Part of an electron transfer chain functioning in an early step of cytosolic Fe-S biogenesis, facilitating the de novo assembly of a [4Fe-4S] cluster on the cytosolic Fe-S scaffold complex. Electrons are transferred from NADPH via a FAD- and FMN-containing diflavin oxidoreductase. Together with the diflavin oxidoreductase, also required for the assembly of the diferric tyrosyl radical cofactor of ribonucleotide reductase (RNR), probably by providing electrons for reduction during radical cofactor maturation in the catalytic small subunit. The protein is Anamorsin homolog of Medicago truncatula (Barrel medic).